The sequence spans 300 residues: Protoheme IX farnesyltransferase 1 (300 aa).

9 consecutive transmembrane segments (helical) span residues 28–48 (VVALMLLTVLVGMCLAMPTIL), 54–74 (VAGLLGIAMMAGSAAALNHLI), 100–120 (ALLFAALLGCLGFVILYVFTN), 122–142 (LTAWLTFASLIGYALIYTAYL), 149–169 (NIVIGGLAGAMPPLLGWTAVT), 176–196 (ALLLVIIIFLWTPPHFWALAI), 222–242 (CILLYTILLAMACLLPVLVGM), 243–263 (SGPLYFVCSSLLSTGFIYKAW), and 280–300 (FSIYHLMLLFMALLLDHYLWA).

This sequence belongs to the UbiA prenyltransferase family. Protoheme IX farnesyltransferase subfamily.

It localises to the cell inner membrane. The catalysed reaction is heme b + (2E,6E)-farnesyl diphosphate + H2O = Fe(II)-heme o + diphosphate. It functions in the pathway porphyrin-containing compound metabolism; heme O biosynthesis; heme O from protoheme: step 1/1. In terms of biological role, converts heme B (protoheme IX) to heme O by substitution of the vinyl group on carbon 2 of heme B porphyrin ring with a hydroxyethyl farnesyl side group. The sequence is that of Protoheme IX farnesyltransferase 1 from Shewanella sp. (strain ANA-3).